Here is a 67-residue protein sequence, read N- to C-terminus: Large ribosomal subunit protein bL35 (67 aa).

It belongs to the bacterial ribosomal protein bL35 family.

The sequence is that of Large ribosomal subunit protein bL35 from Anaeromyxobacter sp. (strain Fw109-5).